Consider the following 250-residue polypeptide: MSNDPTHQFLIQKIVPIEIGGIDFSFTNASLFMAASAAVAAGFLYFSTSNRAIVPGRSQSVAEMSYEFIANMLKEGAGKQGLKFFPLVFSLFMFVLTANLLGMFPYFFTITSQIIVTFALAILVISTVLIYGFYKHGFHFLNVFVPSGVPGILLPLVVAIEIISFLSRPISLSVRLFANMLAGHITLKVFAGFVASLGALGAVGVGGAVLPLIMTVALTGLEFLVAFLQAYVFAVLTCMYLNDAIHPGGH.

Helical transmembrane passes span 26-46 (FTNA…FLYF), 84-104 (FFPL…LGMF), 114-134 (IIVT…YGFY), 143-163 (VFVP…IEII), 193-213 (FVAS…LPLI), and 216-236 (VALT…FAVL).

It belongs to the ATPase A chain family. F-type ATPases have 2 components, CF(1) - the catalytic core - and CF(0) - the membrane proton channel. CF(1) has five subunits: alpha(3), beta(3), gamma(1), delta(1), epsilon(1). CF(0) has three main subunits: a(1), b(2) and c(9-12). The alpha and beta chains form an alternating ring which encloses part of the gamma chain. CF(1) is attached to CF(0) by a central stalk formed by the gamma and epsilon chains, while a peripheral stalk is formed by the delta and b chains.

It localises to the cell inner membrane. In terms of biological role, key component of the proton channel; it plays a direct role in the translocation of protons across the membrane. This Rhizobium etli (strain ATCC 51251 / DSM 11541 / JCM 21823 / NBRC 15573 / CFN 42) protein is ATP synthase subunit a.